The chain runs to 237 residues: Ribonuclease PH (237 aa).

Phosphate contacts are provided by residues Arg86 and 124–126 (GTR).

It belongs to the RNase PH family. As to quaternary structure, homohexameric ring arranged as a trimer of dimers.

It catalyses the reaction tRNA(n+1) + phosphate = tRNA(n) + a ribonucleoside 5'-diphosphate. Its function is as follows. Phosphorolytic 3'-5' exoribonuclease that plays an important role in tRNA 3'-end maturation. Removes nucleotide residues following the 3'-CCA terminus of tRNAs; can also add nucleotides to the ends of RNA molecules by using nucleoside diphosphates as substrates, but this may not be physiologically important. Probably plays a role in initiation of 16S rRNA degradation (leading to ribosome degradation) during starvation. In Shewanella sp. (strain ANA-3), this protein is Ribonuclease PH.